Here is a 314-residue protein sequence, read N- to C-terminus: 4-hydroxy-3-methylbut-2-enyl diphosphate reductase (314 aa).

Residue Cys-12 coordinates [4Fe-4S] cluster. (2E)-4-hydroxy-3-methylbut-2-enyl diphosphate contacts are provided by His-43 and His-81. Residues His-43 and His-81 each contribute to the dimethylallyl diphosphate site. The isopentenyl diphosphate site is built by His-43 and His-81. Cys-103 contributes to the [4Fe-4S] cluster binding site. His-131 lines the (2E)-4-hydroxy-3-methylbut-2-enyl diphosphate pocket. His-131 is a binding site for dimethylallyl diphosphate. Position 131 (His-131) interacts with isopentenyl diphosphate. Glu-133 serves as the catalytic Proton donor. Position 170 (Thr-170) interacts with (2E)-4-hydroxy-3-methylbut-2-enyl diphosphate. Cys-198 lines the [4Fe-4S] cluster pocket. (2E)-4-hydroxy-3-methylbut-2-enyl diphosphate contacts are provided by Ser-226, Asn-228, and Ser-271. The dimethylallyl diphosphate site is built by Ser-226, Asn-228, and Ser-271. Ser-226, Asn-228, and Ser-271 together coordinate isopentenyl diphosphate.

Belongs to the IspH family. [4Fe-4S] cluster serves as cofactor.

It carries out the reaction isopentenyl diphosphate + 2 oxidized [2Fe-2S]-[ferredoxin] + H2O = (2E)-4-hydroxy-3-methylbut-2-enyl diphosphate + 2 reduced [2Fe-2S]-[ferredoxin] + 2 H(+). The enzyme catalyses dimethylallyl diphosphate + 2 oxidized [2Fe-2S]-[ferredoxin] + H2O = (2E)-4-hydroxy-3-methylbut-2-enyl diphosphate + 2 reduced [2Fe-2S]-[ferredoxin] + 2 H(+). The protein operates within isoprenoid biosynthesis; dimethylallyl diphosphate biosynthesis; dimethylallyl diphosphate from (2E)-4-hydroxy-3-methylbutenyl diphosphate: step 1/1. It participates in isoprenoid biosynthesis; isopentenyl diphosphate biosynthesis via DXP pathway; isopentenyl diphosphate from 1-deoxy-D-xylulose 5-phosphate: step 6/6. Catalyzes the conversion of 1-hydroxy-2-methyl-2-(E)-butenyl 4-diphosphate (HMBPP) into a mixture of isopentenyl diphosphate (IPP) and dimethylallyl diphosphate (DMAPP). Acts in the terminal step of the DOXP/MEP pathway for isoprenoid precursor biosynthesis. The protein is 4-hydroxy-3-methylbut-2-enyl diphosphate reductase of Shouchella clausii (strain KSM-K16) (Alkalihalobacillus clausii).